A 677-amino-acid polypeptide reads, in one-letter code: MKERDSESFESLSHQVLPNTSNSTHMIQMAMANSGSSAAAQAGQDQPDRSKWLLDCPEPPSPWHELKRQVKGSFLTKAKKFKSLQKQPFPKQILSVLQAIFPIFGWCRNYKLTMFKNDLMAGLTLASLCIPQSIGYATLAKLDPQYGLYTSVVPPLIYALMGTSREIAIGPVAVVSLLISSMLQKLIDPETDPLGYKKLVLTTTFFAGIFQASFGLFRLGFLVDFLSHAAIVGFMGGAAIVIGLQQLKGLLGITNFTTNTDIVSVLRAVWRSCQQQWSPHTFILGCSFLSFILITRFIGKKYKKLFWLPAIAPLIAVVVSTLMVFLTKADEHGVKTVRHIKGGLNPMSIQDLDFNTPHLGQIAKIGLIIAIVALTEAIAVGRSFAGIKGYRLDGNKEMVAIGFMNVLGSFTSCYAATGSFSRTAVNFAAGCETAMSNIVMAVTVFVALECLTRLLYYTPIAILASIILSALPGLININEAIHIWKVDKFDFLALIGAFFGVLFASVEIGLLVAVVISFAKIILISIRPGIETLGRMPGTDTFTDTNQYPMTVKTPGVLIFRVKSALLCFANASSIEERIMGWVDEEEEEENTKSNAKRKILFVVLDMSSLINVDTSGITALLELHNKLIKTGVELVIVNPKWQVIHKLNQAKFVDRIGGKVYLTIGEALDACFGLKV.

The Cytoplasmic portion of the chain corresponds to 1-118; sequence MKERDSESFE…NYKLTMFKND (118 aa). Residues 23 to 54 are disordered; the sequence is STHMIQMAMANSGSSAAAQAGQDQPDRSKWLL. Low complexity predominate over residues 28–44; the sequence is QMAMANSGSSAAAQAGQ. Residues 119–139 traverse the membrane as a helical segment; it reads LMAGLTLASLCIPQSIGYATL. Residues 140–141 lie on the Extracellular side of the membrane; the sequence is AK. A helical membrane pass occupies residues 142 to 162; that stretch reads LDPQYGLYTSVVPPLIYALMG. Residues 163-166 lie on the Cytoplasmic side of the membrane; sequence TSRE. The helical transmembrane segment at 167-187 threads the bilayer; sequence IAIGPVAVVSLLISSMLQKLI. Residues 188 to 198 lie on the Extracellular side of the membrane; that stretch reads DPETDPLGYKK. The helical transmembrane segment at 199 to 219 threads the bilayer; the sequence is LVLTTTFFAGIFQASFGLFRL. Residues 220–221 lie on the Cytoplasmic side of the membrane; that stretch reads GF. A helical membrane pass occupies residues 222-242; the sequence is LVDFLSHAAIVGFMGGAAIVI. The Extracellular portion of the chain corresponds to 243-278; it reads GLQQLKGLLGITNFTTNTDIVSVLRAVWRSCQQQWS. Asn-255 is a glycosylation site (N-linked (GlcNAc...) asparagine). A helical membrane pass occupies residues 279–299; it reads PHTFILGCSFLSFILITRFIG. Residues 300–304 lie on the Cytoplasmic side of the membrane; sequence KKYKK. Residues 305 to 325 traverse the membrane as a helical segment; that stretch reads LFWLPAIAPLIAVVVSTLMVF. Residues 326-360 lie on the Extracellular side of the membrane; sequence LTKADEHGVKTVRHIKGGLNPMSIQDLDFNTPHLG. Residues 361-381 traverse the membrane as a helical segment; it reads QIAKIGLIIAIVALTEAIAVG. The Cytoplasmic segment spans residues 382–397; that stretch reads RSFAGIKGYRLDGNKE. A helical membrane pass occupies residues 398–418; it reads MVAIGFMNVLGSFTSCYAATG. At 419 to 426 the chain is on the extracellular side; the sequence is SFSRTAVN. A helical membrane pass occupies residues 427 to 447; that stretch reads FAAGCETAMSNIVMAVTVFVA. The Cytoplasmic portion of the chain corresponds to 448 to 454; it reads LECLTRL. The chain crosses the membrane as a helical span at residues 455–475; the sequence is LYYTPIAILASIILSALPGLI. The Extracellular segment spans residues 476–490; it reads NINEAIHIWKVDKFD. A helical membrane pass occupies residues 491-511; sequence FLALIGAFFGVLFASVEIGLL. Residues 512 to 677 are Cytoplasmic-facing; sequence VAVVISFAKI…ALDACFGLKV (166 aa). Positions 548–672 constitute an STAS domain; the sequence is YPMTVKTPGV…LTIGEALDAC (125 aa).

Belongs to the SLC26A/SulP transporter (TC 2.A.53) family. As to expression, expressed in root cap, central cylinder of roots and in vascular tissues of leaves.

Its subcellular location is the membrane. In terms of biological role, low-affinity H(+)/sulfate cotransporter that may be involved in root-to-shoot translocation of sulfate. Plays a central role in the regulation of sulfate assimilation. This is Sulfate transporter 2.1 (SULTR2;1) from Arabidopsis thaliana (Mouse-ear cress).